Here is a 485-residue protein sequence, read N- to C-terminus: MSVPLLKIGVVLSTMAMITNWMSQTLPSLVGLNTTRLSAASGGTLDRSTGVLPTNPEESWQVYSSAQDSEGRCICTVVAPQQTMCSRDARTKQLRQLLEKVQNMSQSIEVLDRRTQRDLQYVEKMENQMKGLETKFKQVEESHKQHLARQFKAIKAKMDELRPLIPVLEEYKADAKLVLQFKEEVQNLTSVLNELQEEIGAYDYDELQSRVSNLEERLRACMQKLACGKLTGISDPVTVKTSGSRFGSWMTDPLAPEGDNRVWYMDGYHNNRFVREYKSMVDFMNTDNFTSHRLPHPWSGTGQVVYNGSIYFNKFQSHIIIRFDLKTEAILKTRSLDYAGYNNMYHYAWGGHSDIDLMVDENGLWAVYATNQNAGNIVISKLDPVSLQILQTWNTSYPKRSAGEAFIICGTLYVTNGYSGGTKVHYAYQTNASTYEYIDIPFQNKYSHISMLDYNPKDRALYAWNNGHQTLYNVTLFHVIRSDEL.

A signal peptide spans 1 to 16 (MSVPLLKIGVVLSTMA). 8 N-linked (GlcNAc...) asparagine glycosylation sites follow: N33, N103, N187, N288, N307, N394, N431, and N473. A coiled-coil region spans residues 87–227 (RDARTKQLRQ…LRACMQKLAC (141 aa)). Positions 226 to 478 (ACGKLTGISD…QTLYNVTLFH (253 aa)) constitute an Olfactomedin-like domain. Residues C227 and C409 are joined by a disulfide bond. Residues 482-485 (SDEL) carry the Endoplasmic reticulum retention signal motif.

Homotetramer; disulfide-linked. Dimer of dimers, giving rise to a V-shaped homotretramer. Isoform 1 and isoform 3 interact with RTN4R. Identified in a complex with RTN4R and LINGO1. Peripherally associated with AMPAR complex. AMPAR complex consists of an inner core made of 4 pore-forming GluA/GRIA proteins (GRIA1, GRIA2, GRIA3 and GRIA4) and 4 major auxiliary subunits arranged in a twofold symmetry. One of the two pairs of distinct binding sites is occupied either by CNIH2, CNIH3 or CACNG2, CACNG3. The other harbors CACNG2, CACNG3, CACNG4, CACNG8 or GSG1L. This inner core of AMPAR complex is complemented by outer core constituents binding directly to the GluA/GRIA proteins at sites distinct from the interaction sites of the inner core constituents. Outer core constituents include at least PRRT1, PRRT2, CKAMP44/SHISA9, FRRS1L and NRN1. The proteins of the inner and outer core serve as a platform for other, more peripherally associated AMPAR constituents, including OLFM1. Alone or in combination, these auxiliary subunits control the gating and pharmacology of the AMPAR complex and profoundly impact their biogenesis and protein processing. Interacts with OLFM2. Interacts with DTNB. Expressed in the brain cortex, olfactory bulb and vomeronasal neuroepithelium (at protein level). Detected in brain cortex, hippocampus, dorsal root ganglion and olfactory bulb.

Its subcellular location is the secreted. It localises to the synapse. The protein resides in the endoplasmic reticulum. The protein localises to the cell projection. It is found in the axon. Its subcellular location is the perikaryon. In terms of biological role, contributes to the regulation of axonal growth in the embryonic and adult central nervous system by inhibiting interactions between RTN4R and LINGO1. Inhibits RTN4R-mediated axon growth cone collapse. May play an important role in regulating the production of neural crest cells by the neural tube. May be required for normal responses to olfactory stimuli. The sequence is that of Noelin (Olfm1) from Mus musculus (Mouse).